Here is a 1075-residue protein sequence, read N- to C-terminus: DNA-directed RNA polymerase subunit beta (1075 aa).

The protein belongs to the RNA polymerase beta chain family. In plastids the minimal PEP RNA polymerase catalytic core is composed of four subunits: alpha, beta, beta', and beta''. When a (nuclear-encoded) sigma factor is associated with the core the holoenzyme is formed, which can initiate transcription.

It localises to the plastid. It is found in the chloroplast. It catalyses the reaction RNA(n) + a ribonucleoside 5'-triphosphate = RNA(n+1) + diphosphate. Functionally, DNA-dependent RNA polymerase catalyzes the transcription of DNA into RNA using the four ribonucleoside triphosphates as substrates. The protein is DNA-directed RNA polymerase subunit beta of Sorghum bicolor (Sorghum).